Reading from the N-terminus, the 1944-residue chain is uncharacterized protein (1944 aa).

The interval 908-999 (SQNLNFLKSK…SESEEESSNG (92 aa)) is disordered. 2 stretches are compositionally biased toward basic and acidic residues: residues 916 to 929 (SKQE…ESAK) and 939 to 949 (LSEKLNSDNHI). Acidic residues predominate over residues 985 to 996 (SDEDTSESEEES). Residue 1293 to 1300 (GPPGTGKT) coordinates ATP. The interval 1824–1944 (QEAHKVKKRH…PPKVEHFKRK (121 aa)) is disordered. 2 stretches are compositionally biased toward basic and acidic residues: residues 1843-1852 (GTERDEDIPN) and 1869-1891 (KVTK…KIDE). Residues 1912–1922 (GHMKKSKKPKS) show a composition bias toward basic residues.

This sequence belongs to the DNA2/NAM7 helicase family.

Its subcellular location is the nucleus. This is an uncharacterized protein from Schizosaccharomyces pombe (strain 972 / ATCC 24843) (Fission yeast).